Reading from the N-terminus, the 399-residue chain is Phosphoglycerate kinase (399 aa).

Residues 24-26 (DYN), Arg-39, 62-65 (HLGR), Arg-121, and Arg-154 each bind substrate. ATP contacts are provided by residues Lys-204, Gly-295, Glu-326, and 355-358 (GGDS).

It belongs to the phosphoglycerate kinase family. As to quaternary structure, monomer.

Its subcellular location is the cytoplasm. The enzyme catalyses (2R)-3-phosphoglycerate + ATP = (2R)-3-phospho-glyceroyl phosphate + ADP. It functions in the pathway carbohydrate degradation; glycolysis; pyruvate from D-glyceraldehyde 3-phosphate: step 2/5. The protein is Phosphoglycerate kinase of Elusimicrobium minutum (strain Pei191).